A 97-amino-acid chain; its full sequence is NADH-quinone oxidoreductase subunit K (97 aa).

3 consecutive transmembrane segments (helical) span residues 1–21, 25–45, and 57–77; these read MSEYLILCSILFSLGAFGVLY, ILVMFMCIELMLNSVNLLMVY, and VFVFFIMAVAAAEITIGLAIL.

The protein belongs to the complex I subunit 4L family. NDH-1 is composed of 14 different subunits. Subunits NuoA, H, J, K, L, M, N constitute the membrane sector of the complex.

It localises to the cell inner membrane. The enzyme catalyses a quinone + NADH + 5 H(+)(in) = a quinol + NAD(+) + 4 H(+)(out). Functionally, NDH-1 shuttles electrons from NADH, via FMN and iron-sulfur (Fe-S) centers, to quinones in the respiratory chain. The immediate electron acceptor for the enzyme in this species is believed to be a menaquinone. Couples the redox reaction to proton translocation (for every two electrons transferred, four hydrogen ions are translocated across the cytoplasmic membrane), and thus conserves the redox energy in a proton gradient. This Cytophaga hutchinsonii (strain ATCC 33406 / DSM 1761 / CIP 103989 / NBRC 15051 / NCIMB 9469 / D465) protein is NADH-quinone oxidoreductase subunit K.